We begin with the raw amino-acid sequence, 165 residues long: Phosphopantetheine adenylyltransferase (165 aa).

Residue S8 coordinates substrate. ATP-binding positions include 8–9 (SF) and H16. Residues K40, T72, and R86 each coordinate substrate. ATP contacts are provided by residues 87-89 (GLR), E97, and 122-128 (YSFLSSS).

It belongs to the bacterial CoaD family. In terms of assembly, homohexamer. It depends on Mg(2+) as a cofactor.

Its subcellular location is the cytoplasm. The catalysed reaction is (R)-4'-phosphopantetheine + ATP + H(+) = 3'-dephospho-CoA + diphosphate. It functions in the pathway cofactor biosynthesis; coenzyme A biosynthesis; CoA from (R)-pantothenate: step 4/5. Reversibly transfers an adenylyl group from ATP to 4'-phosphopantetheine, yielding dephospho-CoA (dPCoA) and pyrophosphate. The sequence is that of Phosphopantetheine adenylyltransferase from Synechococcus sp. (strain WH7803).